Reading from the N-terminus, the 350-residue chain is C5a anaphylatoxin chemotactic receptor 1 (350 aa).

Residues 1 to 36 (APMENSTYDYTNYDSLGTLDPSTPVDNTVRRLRPTT) are Extracellular-facing. N-linked (GlcNAc...) asparagine glycosylation occurs at Asn5. Tyr10 and Tyr13 each carry sulfotyrosine. The helical transmembrane segment at 37-63 (IVALVIYMAVFLVGVPGNALVVWVTAL) threads the bilayer. Topologically, residues 64 to 68 (EAKRT) are cytoplasmic. Residues 69–92 (VNAIWFLNLAVADLLSCLALPILF) traverse the membrane as a helical segment. The Extracellular segment spans residues 93–109 (VSIIQEGHWPFGRAACS). A disulfide bridge links Cys108 with Cys187. The chain crosses the membrane as a helical span at residues 110 to 131 (VLPSLILLNMYASILLLATISA). Topologically, residues 132-152 (DRFLLVFNPIWCQNTRGAGLA) are cytoplasmic. A helical membrane pass occupies residues 153-173 (WLACCVAWGLALLLTIPSFLY). Topologically, residues 174 to 200 (RKVLQDDYPPKTTCGVDYGHEGVRAER) are extracellular. A helical transmembrane segment spans residues 201–226 (AVAIVRLVVGFLLPLFTLSVCYTFLL). Topologically, residues 227–242 (LRTWSRNGTRSTKTLK) are cytoplasmic. The chain crosses the membrane as a helical span at residues 243–265 (VVVAVVVSFFIFWLPYQVMGMIL). The Extracellular portion of the chain corresponds to 266–282 (ALLHPSSATFRWAIRLD). The helical transmembrane segment at 283-303 (PLCIALAYVNCCINPIIYVVA) threads the bilayer. Topologically, residues 304-350 (GKGFQGQLRKSLPSLLRNVLAEESVIQGSKSFSRSTVDTVADKCQAV) are cytoplasmic. Residues Ser314, Ser317, Ser327, Ser332, Ser334, and Ser338 each carry the phosphoserine modification.

This sequence belongs to the G-protein coupled receptor 1 family. Homodimer. May also form higher-order oligomers. Interacts (when phosphorylated) with ARRB1 and ARRB2; the interaction is associated with internalization of C5aR. Post-translationally, sulfation plays a critical role in the association of C5aR with C5a, but no significant role in the ability of the receptor to transduce a signal and mobilize calcium in response to a small peptide agonist. Phosphorylated on serine residues in response to C5a binding, resulting in internalization of the receptor and short-term desensitization to C5a.

It is found in the cell membrane. The protein localises to the cytoplasmic vesicle. Its function is as follows. Receptor for the chemotactic and inflammatory peptide anaphylatoxin C5a. The ligand interacts with at least two sites on the receptor: a high-affinity site on the extracellular N-terminus, and a second site in the transmembrane region which activates downstream signaling events. Receptor activation stimulates chemotaxis, granule enzyme release, intracellular calcium release and superoxide anion production. This Oryctolagus cuniculus (Rabbit) protein is C5a anaphylatoxin chemotactic receptor 1 (C5AR1).